The chain runs to 333 residues: Transcription factor TGA2.2 (333 aa).

The span at 1–14 shows a compositional bias: polar residues; the sequence is MADASSRTDTSTVL. Residues 1 to 48 form a disordered region; the sequence is MADASSRTDTSTVLDTDDKNQMVDGQSGAIVPSNSSDRSDRSDKPMDQ. Basic and acidic residues predominate over residues 37-48; the sequence is DRSDRSDKPMDQ. The bZIP domain occupies 47–91; that stretch reads DQKVLRRLAQNREAARKSRLRKKAYVQQLESSKLKLASLEQEINK. A basic motif region spans residues 49-69; sequence KVLRRLAQNREAARKSRLRKK. Residues 75–89 are leucine-zipper; the sequence is LESSKLKLASLEQEI. One can recognise a DOG1 domain in the interval 114-330; sequence AMTFDLEYAR…RALSSLWLAR (217 aa).

Belongs to the bZIP family. In terms of assembly, interacts with NPR1/NH1. Interacts with NPR3/NH3.

It localises to the nucleus. Transcriptional regulator involved in defense response. This is Transcription factor TGA2.2 from Oryza sativa subsp. japonica (Rice).